A 282-amino-acid chain; its full sequence is NADPH-dependent 7-cyano-7-deazaguanine reductase (282 aa).

88 to 90 (IES) is a binding site for substrate. An NADPH-binding site is contributed by 90–91 (SK). Cys190 functions as the Thioimide intermediate in the catalytic mechanism. The Proton donor role is filled by Asp197. Substrate is bound at residue 229–230 (HE). 258–259 (RG) contributes to the NADPH binding site.

The protein belongs to the GTP cyclohydrolase I family. QueF type 2 subfamily. In terms of assembly, homodimer.

It localises to the cytoplasm. The catalysed reaction is 7-aminomethyl-7-carbaguanine + 2 NADP(+) = 7-cyano-7-deazaguanine + 2 NADPH + 3 H(+). It participates in tRNA modification; tRNA-queuosine biosynthesis. Catalyzes the NADPH-dependent reduction of 7-cyano-7-deazaguanine (preQ0) to 7-aminomethyl-7-deazaguanine (preQ1). The sequence is that of NADPH-dependent 7-cyano-7-deazaguanine reductase from Salmonella paratyphi B (strain ATCC BAA-1250 / SPB7).